The sequence spans 85 residues: Large ribosomal subunit protein bL27 (85 aa).

The segment at 1–20 is disordered; sequence MAHKKGGGTTRNGRDSESKR.

This sequence belongs to the bacterial ribosomal protein bL27 family.

In Herminiimonas arsenicoxydans, this protein is Large ribosomal subunit protein bL27.